The following is a 464-amino-acid chain: Myrosinase 1 (464 aa).

Glutamine 19 is a binding site for substrate. Residues histidine 39 and aspartate 52 each contribute to the Zn(2+) site. 2 residues coordinate substrate: histidine 122 and asparagine 166. The Nucleophile role is filled by glutamate 167. Glutamate 374 acts as the Proton donor in catalysis. N-linked (GlcNAc...) asparagine glycosylation occurs at asparagine 397.

As to quaternary structure, homodimer. In terms of tissue distribution, expressed in the skeletal muscle tissues surrounding the head, abdomen and thorax. Not expressed in flight muscles (at protein level).

It carries out the reaction a thioglucoside + H2O = a sugar + a thiol.. Its function is as follows. Hydrolyzes glucosinolates to a labile aglycone. This rapidly undergoes spontaneous rearrangement, eliminating sulfur to yield a number of toxic metabolites. Thereby developing a chemical defense system that exploits and mimics the host plant. In Brevicoryne brassicae (Mealy cabbage aphid), this protein is Myrosinase 1.